We begin with the raw amino-acid sequence, 326 residues long: Trans-L-3-hydroxyproline dehydratase (326 aa).

The active-site Proton acceptor is the Cys80. Residues 81-82 (GH), Asp241, and 246-247 (GS) contribute to the substrate site.

Belongs to the proline racemase family. In terms of assembly, homodimer.

The catalysed reaction is trans-3-hydroxy-L-proline = 1-pyrroline-2-carboxylate + H2O. Its function is as follows. Catalyzes the dehydration of trans-3-hydroxy-L-proline to delta-1-pyrroline-2-carboxylate (Pyr2C). The chain is Trans-L-3-hydroxyproline dehydratase (l3hypdh) from Saccoglossus kowalevskii (Acorn worm).